Reading from the N-terminus, the 186-residue chain is Elongation factor P (186 aa).

It belongs to the elongation factor P family.

The protein resides in the cytoplasm. It functions in the pathway protein biosynthesis; polypeptide chain elongation. Functionally, involved in peptide bond synthesis. Stimulates efficient translation and peptide-bond synthesis on native or reconstituted 70S ribosomes in vitro. Probably functions indirectly by altering the affinity of the ribosome for aminoacyl-tRNA, thus increasing their reactivity as acceptors for peptidyl transferase. The sequence is that of Elongation factor P from Shewanella piezotolerans (strain WP3 / JCM 13877).